Consider the following 179-residue polypeptide: Ribosome maturation factor RimM (179 aa).

One can recognise a PRC barrel domain in the interval 100-176 (KEEFHLLELI…FVIINPPNGL (77 aa)).

Belongs to the RimM family. As to quaternary structure, binds ribosomal protein uS19.

Its subcellular location is the cytoplasm. Its function is as follows. An accessory protein needed during the final step in the assembly of 30S ribosomal subunit, possibly for assembly of the head region. Essential for efficient processing of 16S rRNA. May be needed both before and after RbfA during the maturation of 16S rRNA. It has affinity for free ribosomal 30S subunits but not for 70S ribosomes. This chain is Ribosome maturation factor RimM, found in Prochlorococcus marinus (strain MIT 9301).